Reading from the N-terminus, the 509-residue chain is Steroid 17-alpha-hydroxylase/17,20 lyase (509 aa).

Asn-202 serves as a coordination point for substrate. A heme-binding site is contributed by Cys-442.

The protein belongs to the cytochrome P450 family. It depends on heme as a cofactor.

The protein localises to the endoplasmic reticulum membrane. Its subcellular location is the microsome membrane. The enzyme catalyses a C21-steroid + reduced [NADPH--hemoprotein reductase] + O2 = a 17alpha-hydroxy-C21-steroid + oxidized [NADPH--hemoprotein reductase] + H2O + H(+). It catalyses the reaction progesterone + reduced [NADPH--hemoprotein reductase] + O2 = 17alpha-hydroxyprogesterone + oxidized [NADPH--hemoprotein reductase] + H2O + H(+). The catalysed reaction is pregnenolone + reduced [NADPH--hemoprotein reductase] + O2 = 17alpha-hydroxypregnenolone + oxidized [NADPH--hemoprotein reductase] + H2O + H(+). It carries out the reaction 17alpha-hydroxyprogesterone + reduced [NADPH--hemoprotein reductase] + O2 = androst-4-ene-3,17-dione + acetate + oxidized [NADPH--hemoprotein reductase] + H2O + 2 H(+). The enzyme catalyses 17alpha-hydroxyprogesterone + reduced [NADPH--hemoprotein reductase] + O2 = 16alpha,17alpha-dihydroxyprogesterone + oxidized [NADPH--hemoprotein reductase] + H2O + H(+). It catalyses the reaction 16alpha,17alpha-dihydroxyprogesterone + reduced [NADPH--hemoprotein reductase] + O2 = 6beta,16alpha,17alpha-trihydroxyprogesterone + oxidized [NADPH--hemoprotein reductase] + H2O + H(+). The catalysed reaction is 17alpha-hydroxypregnenolone + reduced [NADPH--hemoprotein reductase] + O2 = 3beta-hydroxyandrost-5-en-17-one + acetate + oxidized [NADPH--hemoprotein reductase] + H2O + 2 H(+). It carries out the reaction 16alpha,17alpha-dihydroxypregnenolone + reduced [NADPH--hemoprotein reductase] + O2 = 3beta,16alpha-dihydroxy-androst-5-en-17-one + acetate + oxidized [NADPH--hemoprotein reductase] + H2O + 2 H(+). The enzyme catalyses 3beta-hydroxyandrost-5-en-17-one + reduced [NADPH--hemoprotein reductase] + O2 = 3beta,16alpha-dihydroxy-androst-5-en-17-one + oxidized [NADPH--hemoprotein reductase] + H2O + H(+). It catalyses the reaction androst-4-ene-3,17-dione + reduced [NADPH--hemoprotein reductase] + O2 = 16alpha-hydroxyandrost-4-ene-3,17-dione + oxidized [NADPH--hemoprotein reductase] + H2O + H(+). It functions in the pathway steroid hormone biosynthesis. The protein operates within steroid biosynthesis; glucocorticoid biosynthesis. With respect to regulation, regulated predominantly by intracellular cAMP levels. The 17,20-lyase activity is stimulated by cytochrome b5, which acts as an allosteric effector increasing the Vmax of the lyase activity. In terms of biological role, a cytochrome P450 monooxygenase involved in corticoid and androgen biosynthesis. Catalyzes 17-alpha hydroxylation of C21 steroids, which is common for both pathways. A second oxidative step, required only for androgen synthesis, involves an acyl-carbon cleavage. The 17-alpha hydroxy intermediates, as part of adrenal glucocorticoids biosynthesis pathway, are precursors of cortisol. Hydroxylates steroid hormones, pregnenolone and progesterone to form 17-alpha hydroxy metabolites, followed by the cleavage of the C17-C20 bond to form C19 steroids, dehydroepiandrosterone (DHEA) and androstenedione. Has 16-alpha hydroxylase activity. Catalyzes 16-alpha hydroxylation of 17-alpha hydroxy pregnenolone, followed by the cleavage of the C17-C20 bond to form 16-alpha-hydroxy DHEA. Also 16-alpha hydroxylates androgens, relevant for estriol synthesis. Mechanistically, uses molecular oxygen inserting one oxygen atom into a substrate, and reducing the second into a water molecule, with two electrons provided by NADPH via cytochrome P450 reductase (CPR; NADPH-ferrihemoprotein reductase). The protein is Steroid 17-alpha-hydroxylase/17,20 lyase (CYP17A1) of Sus scrofa (Pig).